Here is a 198-residue protein sequence, read N- to C-terminus: Guanylate kinase (198 aa).

A Guanylate kinase-like domain is found at 6–192; sequence KSIVIFTGPS…AAQEIREILH (187 aa). 13–20 serves as a coordination point for ATP; the sequence is GPSGVGKG.

The protein belongs to the guanylate kinase family.

It is found in the cytoplasm. It carries out the reaction GMP + ATP = GDP + ADP. In terms of biological role, essential for recycling GMP and indirectly, cGMP. The chain is Guanylate kinase from Mycoplasmopsis synoviae (strain 53) (Mycoplasma synoviae).